The sequence spans 624 residues: Probable Xaa-Pro aminopeptidase P (624 aa).

Residues D421, D432, E530, and E544 each contribute to the Mn(2+) site.

The protein belongs to the peptidase M24B family. It depends on Mn(2+) as a cofactor.

The enzyme catalyses Release of any N-terminal amino acid, including proline, that is linked to proline, even from a dipeptide or tripeptide.. Catalyzes the removal of a penultimate prolyl residue from the N-termini of peptides. This is Probable Xaa-Pro aminopeptidase P (AMPP) from Arthroderma otae (strain ATCC MYA-4605 / CBS 113480) (Microsporum canis).